The chain runs to 607 residues: tRNA uridine 5-carboxymethylaminomethyl modification enzyme MnmG (607 aa).

FAD is bound by residues 11 to 16 (GGGHAG), V123, and S178. 270-284 (GPRYCPSVEDKIVRF) is a binding site for NAD(+). Position 367 (Q367) interacts with FAD.

This sequence belongs to the MnmG family. In terms of assembly, homodimer. Heterotetramer of two MnmE and two MnmG subunits. The cofactor is FAD.

Its subcellular location is the cytoplasm. In terms of biological role, NAD-binding protein involved in the addition of a carboxymethylaminomethyl (cmnm) group at the wobble position (U34) of certain tRNAs, forming tRNA-cmnm(5)s(2)U34. The polypeptide is tRNA uridine 5-carboxymethylaminomethyl modification enzyme MnmG (Metamycoplasma arthritidis (strain 158L3-1) (Mycoplasma arthritidis)).